We begin with the raw amino-acid sequence, 583 residues long: Aspartate--tRNA(Asp/Asn) ligase (583 aa).

An L-aspartate-binding site is contributed by glutamate 171. The tract at residues 195 to 198 (QLFK) is aspartate. An L-aspartate-binding site is contributed by arginine 217. Residues 217–219 (RDE) and glutamine 226 contribute to the ATP site. Histidine 443 is an L-aspartate binding site. Position 476 (glutamate 476) interacts with ATP. Arginine 483 contributes to the L-aspartate binding site. 528-531 (GLDR) serves as a coordination point for ATP.

It belongs to the class-II aminoacyl-tRNA synthetase family. Type 1 subfamily. As to quaternary structure, homodimer.

It is found in the cytoplasm. The enzyme catalyses tRNA(Asx) + L-aspartate + ATP = L-aspartyl-tRNA(Asx) + AMP + diphosphate. Aspartyl-tRNA synthetase with relaxed tRNA specificity since it is able to aspartylate not only its cognate tRNA(Asp) but also tRNA(Asn). Reaction proceeds in two steps: L-aspartate is first activated by ATP to form Asp-AMP and then transferred to the acceptor end of tRNA(Asp/Asn). This Ruthia magnifica subsp. Calyptogena magnifica protein is Aspartate--tRNA(Asp/Asn) ligase.